Reading from the N-terminus, the 241-residue chain is Carboxy-S-adenosyl-L-methionine synthase (241 aa).

Residues Y38, 63–65 (GCS), 88–89 (DN), 116–117 (DI), N131, and R198 contribute to the S-adenosyl-L-methionine site.

Belongs to the class I-like SAM-binding methyltransferase superfamily. Cx-SAM synthase family. As to quaternary structure, homodimer.

The catalysed reaction is prephenate + S-adenosyl-L-methionine = carboxy-S-adenosyl-L-methionine + 3-phenylpyruvate + H2O. Its function is as follows. Catalyzes the conversion of S-adenosyl-L-methionine (SAM) to carboxy-S-adenosyl-L-methionine (Cx-SAM). The polypeptide is Carboxy-S-adenosyl-L-methionine synthase (Haemophilus influenzae (strain 86-028NP)).